The primary structure comprises 94 residues: Core protein OPG142 (94 aa).

It belongs to the orthopoxvirus OPG142 family. Part of a complex composed of the kinase OPG054, OPG092, OPG100, OPG114, OPG115, OPG142 and OPG157.

It localises to the host cytoplasm. Its subcellular location is the virion. In terms of biological role, late protein which is a part of a large complex required for early virion morphogenesis. This complex participates in the formation of virosomes and the incorporation of virosomal contents into nascent immature virions. Required for the stability and kinase activity of OPG054. This is Core protein OPG142 (OPG142) from Cynomys gunnisoni (Gunnison's prairie dog).